Reading from the N-terminus, the 218-residue chain is Adenylate kinase (218 aa).

ATP is bound at residue 10 to 15 (GAGKGT). The tract at residues 30 to 59 (STGDMIRETIKSGSALGQELKKVLDAGELV) is NMP. AMP-binding positions include Thr31, Arg36, 57 to 59 (ELV), and Gln92. An LID region spans residues 122-159 (GRRIHPASGRTYHTKFNPPKVADKDDVTGEPLITRTDD). Residues Arg123 and 132–133 (TY) contribute to the ATP site. Residues Arg156 and Arg167 each coordinate AMP. Gln202 provides a ligand contact to ATP.

Belongs to the adenylate kinase family. As to quaternary structure, monomer.

The protein resides in the cytoplasm. It carries out the reaction AMP + ATP = 2 ADP. The protein operates within purine metabolism; AMP biosynthesis via salvage pathway; AMP from ADP: step 1/1. Catalyzes the reversible transfer of the terminal phosphate group between ATP and AMP. Plays an important role in cellular energy homeostasis and in adenine nucleotide metabolism. This chain is Adenylate kinase, found in Francisella tularensis subsp. tularensis (strain FSC 198).